Consider the following 168-residue polypeptide: MAPKAVLVGPPGAGKSTIGRRLAQALDLPLFDTDVAVEEEAGRTIAEIFVQEGEPAFRALEEEIVRKAIESHEGIVSLGGGSILSERTRELLKGHTVIYLEISVAEGLKRTGTNTARPLLAGGDPRQKYTELMRKRRPLYRQVASIRIRTDGRSPARVVQQLVAKLAE.

Residue 12 to 17 (GAGKST) participates in ATP binding. Residue Ser-16 participates in Mg(2+) binding. Residues Asp-34, Arg-58, and Gly-80 each contribute to the substrate site. An ATP-binding site is contributed by Arg-117. Arg-136 provides a ligand contact to substrate. Arg-153 lines the ATP pocket.

This sequence belongs to the shikimate kinase family. Monomer. Mg(2+) is required as a cofactor.

Its subcellular location is the cytoplasm. It carries out the reaction shikimate + ATP = 3-phosphoshikimate + ADP + H(+). The protein operates within metabolic intermediate biosynthesis; chorismate biosynthesis; chorismate from D-erythrose 4-phosphate and phosphoenolpyruvate: step 5/7. In terms of biological role, catalyzes the specific phosphorylation of the 3-hydroxyl group of shikimic acid using ATP as a cosubstrate. This is Shikimate kinase from Rhodococcus jostii (strain RHA1).